The primary structure comprises 608 residues: Phosphomethylpyrimidine synthase (608 aa).

Substrate-binding positions include asparagine 216, methionine 245, tyrosine 274, histidine 310, 330–332 (SRG), 371–374 (DGLR), and glutamate 410. Zn(2+) is bound at residue histidine 414. Tyrosine 437 is a substrate binding site. Histidine 478 is a Zn(2+) binding site. Residues cysteine 558, cysteine 561, and cysteine 566 each coordinate [4Fe-4S] cluster.

It belongs to the ThiC family. Homodimer. The cofactor is [4Fe-4S] cluster.

The catalysed reaction is 5-amino-1-(5-phospho-beta-D-ribosyl)imidazole + S-adenosyl-L-methionine = 4-amino-2-methyl-5-(phosphooxymethyl)pyrimidine + CO + 5'-deoxyadenosine + formate + L-methionine + 3 H(+). It functions in the pathway cofactor biosynthesis; thiamine diphosphate biosynthesis. Functionally, catalyzes the synthesis of the hydroxymethylpyrimidine phosphate (HMP-P) moiety of thiamine from aminoimidazole ribotide (AIR) in a radical S-adenosyl-L-methionine (SAM)-dependent reaction. The chain is Phosphomethylpyrimidine synthase from Ruegeria sp. (strain TM1040) (Silicibacter sp.).